The chain runs to 30 residues: Kalata-B5 (30 aa).

Positions 1-30 form a cross-link, cyclopeptide (Gly-Asn); sequence GTPCGESCVYIPCISGVIGCSCTDKVCYLN. Disulfide bonds link C4/C20, C8/C22, and C13/C27.

In terms of processing, this is a cyclic peptide.

Functionally, probably participates in a plant defense mechanism. The protein is Kalata-B5 of Oldenlandia affinis.